We begin with the raw amino-acid sequence, 395 residues long: Argininosuccinate synthase (395 aa).

8–16 (AYSGGLDTS) is an ATP binding site. Tyr-86 is an L-citrulline binding site. Gly-116 is an ATP binding site. L-aspartate contacts are provided by Thr-118, Asn-122, and Asp-123. Asn-122 contributes to the L-citrulline binding site. L-citrulline is bound by residues Arg-126, Ser-173, Ser-182, Glu-257, and Tyr-269.

The protein belongs to the argininosuccinate synthase family. Type 1 subfamily. As to quaternary structure, homotetramer.

The protein resides in the cytoplasm. The enzyme catalyses L-citrulline + L-aspartate + ATP = 2-(N(omega)-L-arginino)succinate + AMP + diphosphate + H(+). Its pathway is amino-acid biosynthesis; L-arginine biosynthesis; L-arginine from L-ornithine and carbamoyl phosphate: step 2/3. The chain is Argininosuccinate synthase from Methanocaldococcus jannaschii (strain ATCC 43067 / DSM 2661 / JAL-1 / JCM 10045 / NBRC 100440) (Methanococcus jannaschii).